The sequence spans 281 residues: Bifunctional protein FolD (281 aa).

NADP(+) is bound by residues 164–166 (GAS), Ile-189, and Ile-230.

It belongs to the tetrahydrofolate dehydrogenase/cyclohydrolase family. In terms of assembly, homodimer.

It catalyses the reaction (6R)-5,10-methylene-5,6,7,8-tetrahydrofolate + NADP(+) = (6R)-5,10-methenyltetrahydrofolate + NADPH. The enzyme catalyses (6R)-5,10-methenyltetrahydrofolate + H2O = (6R)-10-formyltetrahydrofolate + H(+). Its pathway is one-carbon metabolism; tetrahydrofolate interconversion. Catalyzes the oxidation of 5,10-methylenetetrahydrofolate to 5,10-methenyltetrahydrofolate and then the hydrolysis of 5,10-methenyltetrahydrofolate to 10-formyltetrahydrofolate. This chain is Bifunctional protein FolD, found in Sulfurovum sp. (strain NBC37-1).